The chain runs to 245 residues: Ribonuclease 3 (245 aa).

Positions 17-146 (FTDKMKSLGL…FVGALYLDQG (130 aa)) constitute an RNase III domain. Glu59 contributes to the Mg(2+) binding site. Residue Asp63 is part of the active site. Mg(2+) contacts are provided by Asp132 and Glu135. Glu135 is an active-site residue. The 70-residue stretch at 172–241 (DFKTQFQEYV…AEQAYKLMKN (70 aa)) folds into the DRBM domain.

This sequence belongs to the ribonuclease III family. Homodimer. Mg(2+) serves as cofactor.

It localises to the cytoplasm. It carries out the reaction Endonucleolytic cleavage to 5'-phosphomonoester.. Its function is as follows. Digests double-stranded RNA. Involved in the processing of primary rRNA transcript to yield the immediate precursors to the large and small rRNAs (23S and 16S). Processes some mRNAs, and tRNAs when they are encoded in the rRNA operon. Processes pre-crRNA and tracrRNA of type II CRISPR loci if present in the organism. The chain is Ribonuclease 3 from Staphylococcus epidermidis (strain ATCC 35984 / DSM 28319 / BCRC 17069 / CCUG 31568 / BM 3577 / RP62A).